A 639-amino-acid chain; its full sequence is Transcription factor phomR (639 aa).

A DNA-binding region (zn(2)-C6 fungal-type) is located at residues 14-41 (CWTCRLRRKKCNEGGPPCDNCEARGIHC). 2 disordered regions span residues 58-136 (REEA…AGTG) and 476-499 (LPRS…TGPE). Positions 68-108 (SGRGRSYSRSSSTAAAAAPKPAEGAMVTGGSSSSSRGSGSS) are enriched in low complexity.

The protein resides in the nucleus. Transcription factor; part of the gene cluster that mediates the biosynthesis of the phomopsins, a group of hexapeptide mycotoxins which infects lupins and causes lupinosis disease in livestock. May play a role in the regulation of the production of phomopsins. In Diaporthe leptostromiformis (Lupinosis disease fungus), this protein is Transcription factor phomR.